A 436-amino-acid polypeptide reads, in one-letter code: MEPYDDAVVEEHEEQEEERTEEKIINEEYKTWKKNAPFLYDMILSTALEWPTLTTQWLPDKQEVPDKPYSTHRLLIGTHTSSDAQNYLQIAHVQLPNPSAPNPDDYDEERGEIGGYGGSSKKAPMEIKFNIVQKIDHKGEVNKARYQPQNPNIIATMCTDGRVMVWDRSKHPSLPTGQVNPQMELIGHTKEGFGLSWSPHTAGQLATGSEDKTVRIWDLTTYSKGNKLLKPSRTYTHHSSIVNDVQYHPLHSSLIGTVSDDITLQILDIRESETTRAAASTEGQHRDAINAIAFNPAAETVLATGSADKTIGLWDLRNLKTKLHSLESHTDSVTSISWHPFEEAVLASASYDRKIAFWDLSRAGEEQTPEDAQDGPPELLFQHGGHTNRISDFSWNLNDPWVLCSAAEDNLLQVWKVADAIVGKDLEDVPTEELEP.

WD repeat units lie at residues 136-176, 187-227, 237-277, 284-324, and 328-368; these read DHKG…SLPT, GHTK…KGNK, HHSS…TTRA, QHRD…TKLH, and SHTD…EEQT. The interval 370–374 is interaction with the histone H4 N-terminus; sequence EDAQD. One copy of the WD 6 repeat lies at 385–425; it reads GHTNRISDFSWNLNDPWVLCSAAEDNLLQVWKVADAIVGKD.

The protein belongs to the WD repeat RBAP46/RBAP48/MSI1 family. Component of the HAT-B complex composed of at least hat1 and hat2. The HAT-B complex binds to histone H4 tail.

The protein localises to the cytoplasm. Its subcellular location is the nucleus. Regulatory subunit of the histone acetylase B (HAT-B) complex. The complex acetylates 'Lys-12' of histone H4 which is required for telomeric silencing. The sequence is that of Histone acetyltransferase type B subunit 2 (hat2) from Aspergillus fumigatus (strain ATCC MYA-4609 / CBS 101355 / FGSC A1100 / Af293) (Neosartorya fumigata).